Reading from the N-terminus, the 239-residue chain is tRNA1(Val) (adenine(37)-N6)-methyltransferase (239 aa).

This sequence belongs to the methyltransferase superfamily. tRNA (adenine-N(6)-)-methyltransferase family.

Its subcellular location is the cytoplasm. It catalyses the reaction adenosine(37) in tRNA1(Val) + S-adenosyl-L-methionine = N(6)-methyladenosine(37) in tRNA1(Val) + S-adenosyl-L-homocysteine + H(+). Specifically methylates the adenine in position 37 of tRNA(1)(Val) (anticodon cmo5UAC). In Vibrio campbellii (strain ATCC BAA-1116), this protein is tRNA1(Val) (adenine(37)-N6)-methyltransferase.